Reading from the N-terminus, the 417-residue chain is Aminoacyltransferase FemB (417 aa).

Belongs to the FemABX family.

The protein localises to the cytoplasm. The catalysed reaction is MurNAc-L-Ala-D-isoglutaminyl-L-Lys-(N(6)-tri-Gly)-D-Ala-D-Ala-diphospho-di-trans,octa-cis-undecaprenyl-GlcNAc + 2 glycyl-tRNA(Gly) = MurNAc-L-Ala-D-isoglutaminyl-L-Lys-(N(6)-penta-Gly)-D-Ala-D-Ala-diphospho-di-trans,octa-cis-undecaprenyl-GlcNAc + 2 tRNA(Gly) + 2 H(+). Its function is as follows. Catalyzes the incorporation of amino acid(s) into the interchain peptide bridge of peptidoglycan, using aminoacyl-tRNA as amino acid donor. The chain is Aminoacyltransferase FemB (femB) from Staphylococcus epidermidis (strain ATCC 12228 / FDA PCI 1200).